A 109-amino-acid polypeptide reads, in one-letter code: Protein TAR1 (109 aa).

A disordered region spans residues 62–109 (HFTNNWDPRHTGFSPSMTSCSKEHRQGPATKLPSSNYNSDVEDARFQI).

Its subcellular location is the mitochondrion. May be involved in mtDNA stability or mitochondrial gene expression regulation at the post-transcriptional level. The sequence is that of Protein TAR1 (TAR1-A) from Kluyveromyces lactis (strain ATCC 8585 / CBS 2359 / DSM 70799 / NBRC 1267 / NRRL Y-1140 / WM37) (Yeast).